Reading from the N-terminus, the 199-residue chain is N-(5'-phosphoribosyl)anthranilate isomerase (199 aa).

It belongs to the TrpF family.

It carries out the reaction N-(5-phospho-beta-D-ribosyl)anthranilate = 1-(2-carboxyphenylamino)-1-deoxy-D-ribulose 5-phosphate. It functions in the pathway amino-acid biosynthesis; L-tryptophan biosynthesis; L-tryptophan from chorismate: step 3/5. This is N-(5'-phosphoribosyl)anthranilate isomerase from Campylobacter jejuni subsp. jejuni serotype O:2 (strain ATCC 700819 / NCTC 11168).